Here is a 423-residue protein sequence, read N- to C-terminus: Histidine--tRNA ligase (423 aa).

This sequence belongs to the class-II aminoacyl-tRNA synthetase family. In terms of assembly, homodimer.

It is found in the cytoplasm. It carries out the reaction tRNA(His) + L-histidine + ATP = L-histidyl-tRNA(His) + AMP + diphosphate + H(+). This is Histidine--tRNA ligase from Prochlorococcus marinus (strain MIT 9211).